Reading from the N-terminus, the 212-residue chain is Methylthioribulose-1-phosphate dehydratase (212 aa).

Zn(2+)-binding residues include histidine 98 and histidine 100.

Belongs to the aldolase class II family. MtnB subfamily. The cofactor is Zn(2+).

The enzyme catalyses 5-(methylsulfanyl)-D-ribulose 1-phosphate = 5-methylsulfanyl-2,3-dioxopentyl phosphate + H2O. The protein operates within amino-acid biosynthesis; L-methionine biosynthesis via salvage pathway; L-methionine from S-methyl-5-thio-alpha-D-ribose 1-phosphate: step 2/6. Catalyzes the dehydration of methylthioribulose-1-phosphate (MTRu-1-P) into 2,3-diketo-5-methylthiopentyl-1-phosphate (DK-MTP-1-P). The sequence is that of Methylthioribulose-1-phosphate dehydratase from Picosynechococcus sp. (strain ATCC 27264 / PCC 7002 / PR-6) (Agmenellum quadruplicatum).